Here is a 294-residue protein sequence, read N- to C-terminus: ATP phosphoribosyltransferase (294 aa).

Belongs to the ATP phosphoribosyltransferase family. Long subfamily. It depends on Mg(2+) as a cofactor.

The protein localises to the cytoplasm. It carries out the reaction 1-(5-phospho-beta-D-ribosyl)-ATP + diphosphate = 5-phospho-alpha-D-ribose 1-diphosphate + ATP. Its pathway is amino-acid biosynthesis; L-histidine biosynthesis; L-histidine from 5-phospho-alpha-D-ribose 1-diphosphate: step 1/9. With respect to regulation, feedback inhibited by histidine. Its function is as follows. Catalyzes the condensation of ATP and 5-phosphoribose 1-diphosphate to form N'-(5'-phosphoribosyl)-ATP (PR-ATP). Has a crucial role in the pathway because the rate of histidine biosynthesis seems to be controlled primarily by regulation of HisG enzymatic activity. The sequence is that of ATP phosphoribosyltransferase from Chlorobium phaeovibrioides (strain DSM 265 / 1930) (Prosthecochloris vibrioformis (strain DSM 265)).